Here is a 184-residue protein sequence, read N- to C-terminus: Protein C8 (184 aa).

Residues 1-21 (MSSIRFIACLYLISIFGNCHE) form the signal peptide.

The protein belongs to the poxviridae C8 protein family.

The polypeptide is Protein C8 (Vaccinia virus (strain Copenhagen) (VACV)).